Here is a 295-residue protein sequence, read N- to C-terminus: Ribosomal protein L11 methyltransferase (295 aa).

S-adenosyl-L-methionine is bound by residues T145, G166, D188, and N230.

The protein belongs to the methyltransferase superfamily. PrmA family.

It is found in the cytoplasm. It carries out the reaction L-lysyl-[protein] + 3 S-adenosyl-L-methionine = N(6),N(6),N(6)-trimethyl-L-lysyl-[protein] + 3 S-adenosyl-L-homocysteine + 3 H(+). In terms of biological role, methylates ribosomal protein L11. This Haemophilus influenzae (strain PittEE) protein is Ribosomal protein L11 methyltransferase.